The primary structure comprises 87 residues: Small ribosomal subunit protein uS15c (87 aa).

This sequence belongs to the universal ribosomal protein uS15 family. In terms of assembly, part of the 30S ribosomal subunit.

It localises to the plastid. The protein resides in the chloroplast. The sequence is that of Small ribosomal subunit protein uS15c (rps15) from Nicotiana tabacum (Common tobacco).